We begin with the raw amino-acid sequence, 297 residues long: Glutamyl-Q tRNA(Asp) synthetase (297 aa).

Residues 9–13 (RFAPS) and Glu45 each bind L-glutamate. A 'HIGH' region motif is present at residues 12 to 22 (PSPTGPLHFGS). 3 residues coordinate Zn(2+): Cys101, Cys103, and Cys118. L-glutamate contacts are provided by Tyr170 and Arg188. A 'KMSKS' region motif is present at residues 226–230 (KLSKS). Position 229 (Lys229) interacts with ATP.

Belongs to the class-I aminoacyl-tRNA synthetase family. GluQ subfamily. Requires Zn(2+) as cofactor.

Its function is as follows. Catalyzes the tRNA-independent activation of glutamate in presence of ATP and the subsequent transfer of glutamate onto a tRNA(Asp). Glutamate is transferred on the 2-amino-5-(4,5-dihydroxy-2-cyclopenten-1-yl) moiety of the queuosine in the wobble position of the QUC anticodon. The protein is Glutamyl-Q tRNA(Asp) synthetase of Xanthomonas campestris pv. campestris (strain 8004).